The following is a 138-amino-acid chain: Phosphoribosyl-AMP cyclohydrolase (138 aa).

A Mg(2+)-binding site is contributed by Asp-84. Cys-85 serves as a coordination point for Zn(2+). Positions 86 and 88 each coordinate Mg(2+). Zn(2+)-binding residues include Cys-102 and Cys-109.

Belongs to the PRA-CH family. Homodimer. The cofactor is Mg(2+). Zn(2+) is required as a cofactor.

It localises to the cytoplasm. It carries out the reaction 1-(5-phospho-beta-D-ribosyl)-5'-AMP + H2O = 1-(5-phospho-beta-D-ribosyl)-5-[(5-phospho-beta-D-ribosylamino)methylideneamino]imidazole-4-carboxamide. Its pathway is amino-acid biosynthesis; L-histidine biosynthesis; L-histidine from 5-phospho-alpha-D-ribose 1-diphosphate: step 3/9. Its function is as follows. Catalyzes the hydrolysis of the adenine ring of phosphoribosyl-AMP. The polypeptide is Phosphoribosyl-AMP cyclohydrolase (Burkholderia multivorans (strain ATCC 17616 / 249)).